A 545-amino-acid polypeptide reads, in one-letter code: CTP synthase (545 aa).

The interval 1–266 (MTTRYIFVTG…DELVTKRFGI (266 aa)) is amidoligase domain. Ser-14 serves as a coordination point for CTP. Ser-14 is a UTP binding site. ATP is bound by residues 15 to 20 (SLGKGI) and Asp-72. Asp-72 and Glu-140 together coordinate Mg(2+). Residues 147–149 (DIE), 187–192 (KTKPTQ), and Lys-223 each bind CTP. UTP is bound by residues 187 to 192 (KTKPTQ) and Lys-223. 239-241 (KDV) provides a ligand contact to ATP. The region spanning 291–542 (TIGMVGKYIE…VAAAAAHQKR (252 aa)) is the Glutamine amidotransferase type-1 domain. Gly-352 serves as a coordination point for L-glutamine. Catalysis depends on Cys-379, which acts as the Nucleophile; for glutamine hydrolysis. L-glutamine is bound by residues 380–383 (LGMQ), Glu-403, and Arg-470. Active-site residues include His-515 and Glu-517.

Belongs to the CTP synthase family. Homotetramer.

It carries out the reaction UTP + L-glutamine + ATP + H2O = CTP + L-glutamate + ADP + phosphate + 2 H(+). The catalysed reaction is L-glutamine + H2O = L-glutamate + NH4(+). It catalyses the reaction UTP + NH4(+) + ATP = CTP + ADP + phosphate + 2 H(+). Its pathway is pyrimidine metabolism; CTP biosynthesis via de novo pathway; CTP from UDP: step 2/2. Its activity is regulated as follows. Allosterically activated by GTP, when glutamine is the substrate; GTP has no effect on the reaction when ammonia is the substrate. The allosteric effector GTP functions by stabilizing the protein conformation that binds the tetrahedral intermediate(s) formed during glutamine hydrolysis. Inhibited by the product CTP, via allosteric rather than competitive inhibition. Functionally, catalyzes the ATP-dependent amination of UTP to CTP with either L-glutamine or ammonia as the source of nitrogen. Regulates intracellular CTP levels through interactions with the four ribonucleotide triphosphates. The polypeptide is CTP synthase (Shewanella woodyi (strain ATCC 51908 / MS32)).